Here is a 426-residue protein sequence, read N- to C-terminus: Putative phosphate permease TC_0064 (426 aa).

A run of 11 helical transmembrane segments spans residues 1–21 (MWWLLVCVVIGGFYTAWNIGA), 37–57 (LTLRQAVLIAAVFEFLGAVVL), 83–103 (VFGMTAALFATGVWLQIASFF), 104–124 (GWPVSTTHAIVGGVLGFGIIL), 140–160 (VSWLASPIIGGYFAFLIFSFI), 183–203 (AIIIFALGLILILSGAVARVV), 207–227 (VAFRVVCGLVVFAFAFTIWGV), 260–280 (LVVERIFAYLQIVIACFMSFA), 309–329 (VLFIFMSLGGLGLVFGLATWG), 365–385 (FGFPISTTHVVVGAVLGVGLA), and 399–419 (IVLSWFVTVPAGAALSIMFFL).

It belongs to the inorganic phosphate transporter (PiT) (TC 2.A.20) family.

It is found in the cell membrane. Its function is as follows. Potential transporter for phosphate. This Chlamydia muridarum (strain MoPn / Nigg) protein is Putative phosphate permease TC_0064.